Here is a 78-residue protein sequence, read N- to C-terminus: Sec-independent protein translocase protein TatA (78 aa).

The helical transmembrane segment at 1–21 (MFGRIGLPEILLILAIALIIF) threads the bilayer. Residues 50-78 (EVNEVEEEVKENKSSDVKENEDNKTEKST) form a disordered region. Positions 59-78 (KENKSSDVKENEDNKTEKST) are enriched in basic and acidic residues.

This sequence belongs to the TatA/E family. Forms a complex with TatC.

It localises to the cell membrane. Its function is as follows. Part of the twin-arginine translocation (Tat) system that transports large folded proteins containing a characteristic twin-arginine motif in their signal peptide across membranes. TatA could form the protein-conducting channel of the Tat system. The sequence is that of Sec-independent protein translocase protein TatA from Natranaerobius thermophilus (strain ATCC BAA-1301 / DSM 18059 / JW/NM-WN-LF).